We begin with the raw amino-acid sequence, 423 residues long: Putative competence-damage inducible protein (423 aa).

Belongs to the CinA family.

This is Putative competence-damage inducible protein from Streptococcus thermophilus (strain ATCC BAA-491 / LMD-9).